We begin with the raw amino-acid sequence, 182 residues long: ATP-dependent protease subunit HslV (182 aa).

The active site involves threonine 6. Na(+) is bound by residues alanine 164, cysteine 167, and threonine 170.

It belongs to the peptidase T1B family. HslV subfamily. As to quaternary structure, a double ring-shaped homohexamer of HslV is capped on each side by a ring-shaped HslU homohexamer. The assembly of the HslU/HslV complex is dependent on binding of ATP.

Its subcellular location is the cytoplasm. The catalysed reaction is ATP-dependent cleavage of peptide bonds with broad specificity.. Its activity is regulated as follows. Allosterically activated by HslU binding. Functionally, protease subunit of a proteasome-like degradation complex believed to be a general protein degrading machinery. The polypeptide is ATP-dependent protease subunit HslV (Borrelia garinii subsp. bavariensis (strain ATCC BAA-2496 / DSM 23469 / PBi) (Borreliella bavariensis)).